The primary structure comprises 166 residues: Peptide methionine sulfoxide reductase MsrA (166 aa).

C11 is an active-site residue.

It belongs to the MsrA Met sulfoxide reductase family.

The catalysed reaction is L-methionyl-[protein] + [thioredoxin]-disulfide + H2O = L-methionyl-(S)-S-oxide-[protein] + [thioredoxin]-dithiol. The enzyme catalyses [thioredoxin]-disulfide + L-methionine + H2O = L-methionine (S)-S-oxide + [thioredoxin]-dithiol. In terms of biological role, has an important function as a repair enzyme for proteins that have been inactivated by oxidation. Catalyzes the reversible oxidation-reduction of methionine sulfoxide in proteins to methionine. The polypeptide is Peptide methionine sulfoxide reductase MsrA (Lachnoclostridium phytofermentans (strain ATCC 700394 / DSM 18823 / ISDg) (Clostridium phytofermentans)).